A 273-amino-acid chain; its full sequence is Ribosomal RNA small subunit methyltransferase A (273 aa).

S-adenosyl-L-methionine contacts are provided by histidine 10, leucine 12, glycine 37, glutamate 58, aspartate 83, and asparagine 108.

Belongs to the class I-like SAM-binding methyltransferase superfamily. rRNA adenine N(6)-methyltransferase family. RsmA subfamily.

It is found in the cytoplasm. It carries out the reaction adenosine(1518)/adenosine(1519) in 16S rRNA + 4 S-adenosyl-L-methionine = N(6)-dimethyladenosine(1518)/N(6)-dimethyladenosine(1519) in 16S rRNA + 4 S-adenosyl-L-homocysteine + 4 H(+). Specifically dimethylates two adjacent adenosines (A1518 and A1519) in the loop of a conserved hairpin near the 3'-end of 16S rRNA in the 30S particle. May play a critical role in biogenesis of 30S subunits. This is Ribosomal RNA small subunit methyltransferase A from Picosynechococcus sp. (strain ATCC 27264 / PCC 7002 / PR-6) (Agmenellum quadruplicatum).